The sequence spans 239 residues: Sensory rhodopsin-1 (239 aa).

At Met-1–Ala-3 the chain is on the extracellular side. Residues Val-4–Leu-25 form a helical membrane-spanning segment. Topologically, residues Tyr-26–His-34 are cytoplasmic. The helical transmembrane segment at Gln-35–Ala-56 threads the bilayer. Residues Tyr-57–Val-70 lie on the Extracellular side of the membrane. The chain crosses the membrane as a helical span at residues Gly-71–Ala-92. The Cytoplasmic portion of the chain corresponds to Gly-93–Ser-95. The helical transmembrane segment at Arg-96–Val-118 threads the bilayer. Topologically, residues Thr-119 to Thr-122 are extracellular. A helical membrane pass occupies residues Leu-123–Val-150. The Cytoplasmic segment spans residues Pro-151–Val-153. A helical membrane pass occupies residues Pro-154–Gly-181. Residues Pro-182 to Thr-189 lie on the Extracellular side of the membrane. A helical membrane pass occupies residues Ala-190–Ser-222. N6-(retinylidene)lysine is present on Lys-205. At Glu-223–Asp-239 the chain is on the cytoplasmic side.

It belongs to the archaeal/bacterial/fungal opsin family. In terms of assembly, interacts with HTR-I.

The protein resides in the cell membrane. Involved in the control of phototaxis. Mediates both photoattractant (in the orange light) and photophobic (in the near UV light) responses. The signal is then transmitted to the sensory rhodopsin I transducer (HTR-I). The protein is Sensory rhodopsin-1 (sopI) of Halobacterium salinarum (strain ATCC 29341 / DSM 671 / R1).